The following is a 181-amino-acid chain: Oligoribonuclease (181 aa).

The Exonuclease domain occupies 8–171 (LIWIDLEMTG…DDIRESIAEL (164 aa)). Tyr129 is an active-site residue.

Belongs to the oligoribonuclease family.

The protein resides in the cytoplasm. Functionally, 3'-to-5' exoribonuclease specific for small oligoribonucleotides. The sequence is that of Oligoribonuclease from Alcanivorax borkumensis (strain ATCC 700651 / DSM 11573 / NCIMB 13689 / SK2).